The sequence spans 85 residues: ATP synthase subunit c (85 aa).

2 helical membrane-spanning segments follow: residues 10-30 (IAVG…FAIL) and 53-73 (FIIA…ALLF).

It belongs to the ATPase C chain family. F-type ATPases have 2 components, F(1) - the catalytic core - and F(0) - the membrane proton channel. F(1) has five subunits: alpha(3), beta(3), gamma(1), delta(1), epsilon(1). F(0) has three main subunits: a(1), b(2) and c(10-14). The alpha and beta chains form an alternating ring which encloses part of the gamma chain. F(1) is attached to F(0) by a central stalk formed by the gamma and epsilon chains, while a peripheral stalk is formed by the delta and b chains.

The protein localises to the cell inner membrane. F(1)F(0) ATP synthase produces ATP from ADP in the presence of a proton or sodium gradient. F-type ATPases consist of two structural domains, F(1) containing the extramembraneous catalytic core and F(0) containing the membrane proton channel, linked together by a central stalk and a peripheral stalk. During catalysis, ATP synthesis in the catalytic domain of F(1) is coupled via a rotary mechanism of the central stalk subunits to proton translocation. Functionally, key component of the F(0) channel; it plays a direct role in translocation across the membrane. A homomeric c-ring of between 10-14 subunits forms the central stalk rotor element with the F(1) delta and epsilon subunits. In Aliivibrio salmonicida (strain LFI1238) (Vibrio salmonicida (strain LFI1238)), this protein is ATP synthase subunit c.